We begin with the raw amino-acid sequence, 750 residues long: Methylmalonyl-CoA mutase, mitochondrial (750 aa).

Residues 1–32 constitute a mitochondrion transit peptide; sequence MLRAKNQLFLLSPHYLRQVKESSGSRLIQQRL. A malonyl-CoA-binding site is contributed by Gln-50. The residue at position 89 (Lys-89) is an N6-acetyllysine. Malonyl-CoA-binding positions include 96–99 and 106–110; these read YPTM and TIRQY. Position 212 is an N6-acetyllysine (Lys-212). Residues 216-218, Arg-228, Lys-255, His-265, and 304-306 contribute to the malonyl-CoA site; these read TIQ and RLS. The residue at position 335 (Lys-335) is an N6-acetyllysine. Residue Lys-343 is modified to N6-succinyllysine. Ser-481 is subject to Phosphoserine. Lys-595 bears the N6-succinyllysine mark. Position 602 is an N6-acetyllysine (Lys-602). The B12-binding domain occupies 614-746; that stretch reads RPRLLVAKMG…DDIEKCLEKK (133 aa). His-627 is a binding site for adenosylcob(III)alamin.

This sequence belongs to the methylmalonyl-CoA mutase family. In terms of assembly, homodimer. Interacts (the apoenzyme form) with MMAA; the interaction is GTP dependent. Requires adenosylcob(III)alamin as cofactor.

The protein localises to the mitochondrion matrix. It is found in the mitochondrion. Its subcellular location is the cytoplasm. The catalysed reaction is (R)-methylmalonyl-CoA = succinyl-CoA. Its activity is regulated as follows. Inhibited by itaconyl-CoA, a metabolite that inactivates the coenzyme B12 cofactor. Catalyzes the reversible isomerization of methylmalonyl-CoA (MMCoA) (generated from branched-chain amino acid metabolism and degradation of dietary odd chain fatty acids and cholesterol) to succinyl-CoA (3-carboxypropionyl-CoA), a key intermediate of the tricarboxylic acid cycle. The polypeptide is Methylmalonyl-CoA mutase, mitochondrial (MMUT) (Bos taurus (Bovine)).